We begin with the raw amino-acid sequence, 361 residues long: MDRAPVTTGPLDMPIMHDSDRYDFVKDIGSGNFGVARLMRDKLTKELVAVKYIERGDKIDENVQREIINHRSLRHPNIVRFKEVILTPTHLAIIMEYASGGELYERICNAGRFSEDEARFFFQQLLSGVSYCHSMQICHRDLKLENTLLDGSPAPRLKICDFGYSKSSVLHSQPKSTVGTPAYIAPEVLLRQEYDGKIADVWSCGVTLYVMLVGAYPFEDPEEPRDYRKTIQRILSVKYSIPDDIRISPECCHLISRIFVADPATRISIPEIKTHSWFLKNLPADLMNESNTGSQFQEPEQPMQSLDTIMQIISEATIPAVRNRCLDDFMTDNLDLDDDMDDFDSESEIDIDSSGEIVYAL.

The region spanning 22–278 (YDFVKDIGSG…IPEIKTHSWF (257 aa)) is the Protein kinase domain. ATP-binding positions include 28 to 36 (IGSGNFGVA) and lysine 51. Aspartate 141 serves as the catalytic Proton acceptor.

Belongs to the protein kinase superfamily. Ser/Thr protein kinase family. In terms of assembly, interacts with ABI1. Interacts with I-2 and TOPP1. Interacts with FREE1 (via C-terminus). In terms of processing, autophosphorylated in vitro. In terms of tissue distribution, expressed at low levels in seeds, seedlings, roots (especially in tips), stems, leaves, shoots, flowers and siliques.

The enzyme catalyses L-seryl-[protein] + ATP = O-phospho-L-seryl-[protein] + ADP + H(+). It carries out the reaction L-threonyl-[protein] + ATP = O-phospho-L-threonyl-[protein] + ADP + H(+). Its activity is regulated as follows. Activated by autophosphorylation of its activation loop. Its function is as follows. Together with SRK2D, key component and activator of the abscisic acid (ABA) signaling pathway that regulates numerous ABA responses, such as seed germination, Pro accumulation, root growth inhibition, dormancy and seedling growth, and, to a lesser extent, stomatal closure. In response to ABA, phosphorylates the ESCRT-I complex component FREE1, which is required for ABA-induced FREE1 nuclear import. This chain is Serine/threonine-protein kinase SRK2I (SRK2I), found in Arabidopsis thaliana (Mouse-ear cress).